The chain runs to 348 residues: Isopentenyl-diphosphate delta-isomerase (348 aa).

Residue 9-10 participates in substrate binding; that stretch reads RK. FMN is bound by residues 68-70, S98, and N127; that span reads AMT. Residue Q157 participates in substrate binding. Residue E158 coordinates Mg(2+). FMN is bound by residues K188, S213, T218, and 286–287; that span reads AG.

This sequence belongs to the IPP isomerase type 2 family. As to quaternary structure, homooctamer. Dimer of tetramers. FMN serves as cofactor. It depends on NADPH as a cofactor. Requires Mg(2+) as cofactor.

It localises to the cytoplasm. The enzyme catalyses isopentenyl diphosphate = dimethylallyl diphosphate. Its function is as follows. Involved in the biosynthesis of isoprenoids. Catalyzes the 1,3-allylic rearrangement of the homoallylic substrate isopentenyl (IPP) to its allylic isomer, dimethylallyl diphosphate (DMAPP). This chain is Isopentenyl-diphosphate delta-isomerase, found in Limosilactobacillus reuteri (strain DSM 20016) (Lactobacillus reuteri).